The chain runs to 321 residues: Probable DNA polymerase III subunit delta (321 aa).

The protein belongs to the DNA polymerase HolA subunit family. As to quaternary structure, component of the DNA clamp loading complex consisting of tau(3):delta(1):delta'(1). The DNA polymerase III holoenzyme complex contains at least 10 different subunits organized into 3 functionally essential subassemblies: the Pol III core, the beta sliding clamp processivity factor and the clamp-loading complex. The Pol III core (subunits alpha, epsilon and theta) contains the polymerase and the 3'-5' exonuclease proofreading activities. The polymerase is tethered to the template via the dimeric beta sliding clamp processivity factor. The DNA clamp-loading complex assembles the beta sliding clamp onto the primed template and plays a central role in the organization and communication at the replication fork.

The enzyme catalyses DNA(n) + a 2'-deoxyribonucleoside 5'-triphosphate = DNA(n+1) + diphosphate. Part of the beta sliding clamp loading complex, which hydrolyzes ATP to load the beta clamp onto primed DNA to form the DNA replication pre-initiation complex. DNA polymerase III is a complex, multichain enzyme responsible for most of the replicative synthesis in bacteria. This DNA polymerase also exhibits 3'-5' exonuclease activity. The delta subunit is the wrench that will open the beta subunit dimer. The DNA clamp loading complex (tau(3),delta,delta') is thought to load beta dimers onto DNA by binding ATP which alters the complex's conformation so it can bind beta sliding clamp dimers and open them at one interface. Primed DNA is recognized, ATP is hydrolyzed releasing the clamp loading complex and closing the beta sliding clamp ring around the primed DNA. In Rickettsia prowazekii (strain Madrid E), this protein is Probable DNA polymerase III subunit delta.